The sequence spans 420 residues: Interleukin-5 receptor subunit alpha (420 aa).

An N-terminal signal peptide occupies residues 1-20 (MIIVAHVLLILLGATEILQA). The Extracellular portion of the chain corresponds to 21–342 (DLLPDEKISL…NDEHKPLREW (322 aa)). Positions 32-123 (PPVNFTIKVT…ASAELHAPPG (92 aa)) constitute a Fibronectin type-III 1 domain. Residues N35 and N131 are each glycosylated (N-linked (GlcNAc...) asparagine). 2 cysteine pairs are disulfide-bonded: C134/C155 and C182/C196. N-linked (GlcNAc...) asparagine glycans are attached at residues N216 and N244. The 94-residue stretch at 241–334 (PPLNVTAEIE…WSQPIYVGND (94 aa)) folds into the Fibronectin type-III 2 domain. C269 and C316 form a disulfide bridge. Residues 322–326 (WSEWS) carry the WSXWS motif motif. A helical membrane pass occupies residues 343 to 362 (FVIVIMATICFILLILSLIC). Residues 363-420 (KICHLWIKLFPPIPAPKSNIKDLFVTTNYEKAGSSETEIEVICYIEKPGVETLEDSVF) are Cytoplasmic-facing. A Box 1 motif motif is present at residues 371–379 (LFPPIPAPK).

It belongs to the type I cytokine receptor family. Type 5 subfamily. As to quaternary structure, interacts with IL5. Interacts with CSF2RB. Interacts with JAK2. Interacts with SDCBP. In terms of tissue distribution, expressed on eosinophils and basophils.

The protein resides in the membrane. Its function is as follows. Cell surface receptor that plays an important role in the survival, differentiation, and chemotaxis of eosinophils. Acts by forming a heterodimeric receptor with CSF2RB subunit and subsequently binding to interleukin-5. In unstimulated conditions, interacts constitutively with JAK2. Heterodimeric receptor activation leads to JAK2 stimulation and subsequent activation of the JAK-STAT pathway. The chain is Interleukin-5 receptor subunit alpha (IL5RA) from Homo sapiens (Human).